The chain runs to 198 residues: Thymidine kinase (198 aa).

ATP is bound by residues 15-22 (GCMFSGKT) and 87-90 (DEAQ). Catalysis depends on glutamate 88, which acts as the Proton acceptor. Positions 144, 147, 182, and 185 each coordinate Zn(2+).

This sequence belongs to the thymidine kinase family. As to quaternary structure, homotetramer.

The protein localises to the cytoplasm. It catalyses the reaction thymidine + ATP = dTMP + ADP + H(+). The chain is Thymidine kinase from Coprothermobacter proteolyticus (strain ATCC 35245 / DSM 5265 / OCM 4 / BT).